The sequence spans 427 residues: Lipophilic envelope-spanning tunnel protein A (427 aa).

Residues 1 to 75 (MALNTPQITP…LTRLAAMAFT (75 aa)) lie on the Cytoplasmic side of the membrane. The chain crosses the membrane as a helical span at residues 76–96 (MLLLMPFAWGEPLLHIWLLGI). Residues 97 to 120 (RIDANVMQGIWQMTKQGDAITGSM) are Periplasmic-facing. A helical transmembrane segment spans residues 121–141 (VFFCVIGAPLILVTSIAYLWF). Over 142–269 (GNRLGMNLRP…RHSLQKCWAA (128 aa)) the chain is Cytoplasmic. Residues 270-290 (LLASIVLLLPANLLPISIIYL) traverse the membrane as a helical segment. The Periplasmic segment spans residues 291 to 310 (NGGRQEDTILSGIMSLASSN). The helical transmembrane segment at 311 to 331 (IAVAGIVFIASILVPFTKVIV) threads the bilayer. At 332 to 350 (MFTLLLSIHFKCQQGLRTR) the chain is on the cytoplasmic side. The helical transmembrane segment at 351 to 371 (ILLLRMVTWIGRWSMLDLFVI) threads the bilayer. Over 372-382 (SLTMSLINRDQ) the chain is Periplasmic. A helical membrane pass occupies residues 383-403 (ILAFTMGPAAFYFGAAVILTI). The Cytoplasmic portion of the chain corresponds to 404-427 (LAVEWLDSRLLWDAHESGNARFDD).

The protein belongs to the PqiA family. In terms of assembly, may interact with LetB in the inner membrane.

The protein resides in the cell inner membrane. Its function is as follows. Could be part, together with LetB, of a system that transports lipids between the inner membrane and the outer membrane. Contributes to membrane integrity. This Escherichia coli (strain K12) protein is Lipophilic envelope-spanning tunnel protein A.